The primary structure comprises 180 residues: Large ribosomal subunit protein uL6 (180 aa).

A disordered region spans residues 158–180 (YSGKGISYKGEKIRRKEGKTASK).

The protein belongs to the universal ribosomal protein uL6 family. As to quaternary structure, part of the 50S ribosomal subunit.

Its function is as follows. This protein binds to the 23S rRNA, and is important in its secondary structure. It is located near the subunit interface in the base of the L7/L12 stalk, and near the tRNA binding site of the peptidyltransferase center. The protein is Large ribosomal subunit protein uL6 of Mycoplasmopsis synoviae (strain 53) (Mycoplasma synoviae).